The sequence spans 652 residues: Acetyl-coenzyme A synthetase (652 aa).

Residues 191 to 194, Thr311, and Asn335 each bind CoA; that span reads RAGR. Residues 387-389, 411-416, Asp500, and Arg515 each bind ATP; these read GEP and DTWWQT. Ser523 is a CoA binding site. Arg526 contributes to the ATP binding site. Mg(2+) contacts are provided by Val537, His539, and Ile542. A CoA-binding site is contributed by Arg584. Lys609 carries the N6-acetyllysine; by autocatalysis modification.

The protein belongs to the ATP-dependent AMP-binding enzyme family. Forms a 1:1 complex with CobB/NAD-dependent deacetylase. Mg(2+) is required as a cofactor. In terms of processing, autoacetylated. Deacetylation by CobB activates the enzyme.

The enzyme catalyses acetate + ATP + CoA = acetyl-CoA + AMP + diphosphate. Functionally, catalyzes the conversion of acetate into acetyl-CoA (AcCoA), an essential intermediate at the junction of anabolic and catabolic pathways. Acs undergoes a two-step reaction. In the first half reaction, Acs combines acetate with ATP to form acetyl-adenylate (AcAMP) intermediate. In the second half reaction, it can then transfer the acetyl group from AcAMP to the sulfhydryl group of CoA, forming the product AcCoA. Enables the cell to use acetate during aerobic growth to generate energy via the TCA cycle, and biosynthetic compounds via the glyoxylate shunt. Acetylates CheY, the response regulator involved in flagellar movement and chemotaxis. This chain is Acetyl-coenzyme A synthetase, found in Escherichia coli (strain K12).